A 64-amino-acid chain; its full sequence is Beta-defensin 5 (64 aa).

The first 22 residues, 1 to 22 (MRLHHLLLVLLFLVLSAGSGFT), serve as a signal peptide directing secretion. Gln-23 carries the pyrrolidone carboxylic acid modification. 3 cysteine pairs are disulfide-bonded: Cys-31–Cys-60, Cys-38–Cys-53, and Cys-43–Cys-61.

The protein belongs to the beta-defensin family. Neutrophilic granules. Alveolar macrophages.

It is found in the secreted. Has bactericidal activity. Active against E.coli ML35 but not against S.aureus 502A. In Bos taurus (Bovine), this protein is Beta-defensin 5 (DEFB5).